The following is a 352-amino-acid chain: MFRYLSKRQWILLLLGILFVVAGYFILPVSVPLIIALITALFLNPAVRWMQFRFRLNRKMAVTIVFLLFVIMIGLLGTYAVTRAVTQLVELADNAPSYINQINNVLINWQNNMNSFTQNMPSEFVDKVSVELQNTIDTTTQTLSQKLQLSNIAAFAAKIPEYLISFLVYLIALFLFMLELPRLKDKMHGNFTESTSEKVKFMNARLSYVVFGFLKAQFLVSIVIFVVCLIGLFWITPEVAIVMSLIIWIVDFVPIIGSIVILGPWALYMLIVGDIAMGGQLAMLAIILLAIRRTVEPKVMGRHIGLSPLATLIAMYIGLQLIGLMGFILGPLLVIAFNSAKEAGIIRWNFKL.

Helical transmembrane passes span I11–V31, P32–F52, A61–V81, I159–E179, A216–T236, I241–I261, I271–I291, and I317–F337.

The protein belongs to the autoinducer-2 exporter (AI-2E) (TC 2.A.86) family.

It is found in the cell membrane. Its function is as follows. Catalyzes the pH-dependent efflux of sodium and lithium in exchange for external protons. The polypeptide is Sodium-lithium/proton antiporter (Halobacillus andaensis).